A 398-amino-acid chain; its full sequence is 1-deoxy-D-xylulose 5-phosphate reductoisomerase (398 aa).

NADPH-binding residues include Thr-11, Gly-12, Ser-13, Ile-14, and Asn-125. Lys-126 contacts 1-deoxy-D-xylulose 5-phosphate. Glu-127 contacts NADPH. Asp-151 contributes to the Mn(2+) binding site. 4 residues coordinate 1-deoxy-D-xylulose 5-phosphate: Ser-152, Glu-153, Ser-186, and His-209. Glu-153 is a Mn(2+) binding site. Residue Gly-215 participates in NADPH binding. 4 residues coordinate 1-deoxy-D-xylulose 5-phosphate: Ser-222, Asn-227, Lys-228, and Glu-231. Residue Glu-231 participates in Mn(2+) binding.

The protein belongs to the DXR family. Requires Mg(2+) as cofactor. The cofactor is Mn(2+).

The enzyme catalyses 2-C-methyl-D-erythritol 4-phosphate + NADP(+) = 1-deoxy-D-xylulose 5-phosphate + NADPH + H(+). Its pathway is isoprenoid biosynthesis; isopentenyl diphosphate biosynthesis via DXP pathway; isopentenyl diphosphate from 1-deoxy-D-xylulose 5-phosphate: step 1/6. Catalyzes the NADPH-dependent rearrangement and reduction of 1-deoxy-D-xylulose-5-phosphate (DXP) to 2-C-methyl-D-erythritol 4-phosphate (MEP). The polypeptide is 1-deoxy-D-xylulose 5-phosphate reductoisomerase (Acinetobacter baylyi (strain ATCC 33305 / BD413 / ADP1)).